The primary structure comprises 706 residues: Gamma-adducin (706 aa).

Low complexity predominate over residues 1–11 (MSSDTSPAVVT). The disordered stretch occupies residues 1 to 23 (MSSDTSPAVVTTPPPPSMPHKER). Ser2 carries the post-translational modification N-acetylserine. Phosphoserine occurs at positions 31, 42, 64, 402, 414, 423, 442, and 461. 4 disordered regions span residues 471–495 (AEDS…VPLN), 534–556 (PPST…PFSH), 574–610 (QGLD…RLEE), and 651–706 (TSTT…KVEA). A Glycyl lysine isopeptide (Lys-Gly) (interchain with G-Cter in SUMO2) cross-link involves residue Lys484. Ser583, Ser585, and Ser590 each carry phosphoserine. Low complexity-rich tracts occupy residues 590–605 (SVSQ…QSVP) and 651–662 (TSTTIENIEITI). 5 positions are modified to phosphoserine: Ser673, Ser677, Ser679, Ser681, and Ser683. Basic residues predominate over residues 682–706 (PSKKKKKFRTPSFLKKNKKKEKVEA). Residues 684–701 (KKKKKFRTPSFLKKNKKK) form an interaction with calmodulin region.

It belongs to the aldolase class II family. Adducin subfamily. As to quaternary structure, heterodimer of an alpha and a gamma subunit. Sumoylated. In terms of processing, proteolytically cleaved by asparagine endopeptidase (AEP) into 2 fragments. Overexpression of the 1-357 fragment induces neuronal apoptosis, and overexpression of either 1-357 or 358-706 fragment increases the degeneration of dendritic spines. Overexpression of the 1-357 fragment impairs neurite outgrowth by downregulating the expression of Rac2, and induces synaptic dysfunction and cognitive impairments in tau P301S transgenic mice, a mouse model for Alzheimer disease (AD). In terms of tissue distribution, cleavage fragment 1-357 is expressed in the brain and the expression increases with age (at protein level). The fragment is expressed in the cortex, hippocampal CA1 region and hippocampal dentate gyrus in tau P301S transgenic mice, a mouse model for Alzheimer disease (AD) (at protein level). The fragment is only weakly expressed in non-transgenic mouse brain sections (at protein level).

The protein localises to the cytoplasm. Its subcellular location is the cytoskeleton. It localises to the cell membrane. Membrane-cytoskeleton-associated protein that promotes the assembly of the spectrin-actin network. Plays a role in actin filament capping. Binds to calmodulin. Involved in myogenic reactivity of the renal afferent arteriole (Af-art), renal interlobular arteries and middle cerebral artery (MCA) to increased perfusion pressure. Involved in regulation of potassium channels in the vascular smooth muscle cells (VSMCs) of the Af-art and MCA ex vivo. Involved in regulation of glomerular capillary pressure, glomerular filtration rate (GFR) and glomerular nephrin expression in response to hypertension. Involved in renal blood flow (RBF) autoregulation. Plays a role in podocyte structure and function. Regulates globular monomer actin (G-actin) and filamentous polymer actin (F-actin) ratios in the primary podocytes affecting actin cytoskeleton organization. Regulates expression of synaptopodin, RhoA, Rac1 and CDC42 in the renal cortex and the primary podocytes. Regulates expression of nephrin in the glomeruli and in the primary podocytes, expression of nephrin and podocinin in the renal cortex, and expression of focal adhesion proteins integrin alpha-3 and integrin beta-1 in the glomeruli. Involved in cell migration and cell adhesion of podocytes, and in podocyte foot process effacement. Regulates expression of profibrotics markers MMP2, MMP9, TGF beta-1, tubular tight junction protein E-cadherin, and mesenchymal markers vimentin and alpha-SMA. Promotes the growth of neurites. In Mus musculus (Mouse), this protein is Gamma-adducin (Add3).